The following is a 202-amino-acid chain: Secreted RxLR effector protein 11 (202 aa).

An N-terminal signal peptide occupies residues 1–23 (MRLNFTKLFAGAVALAWTTESMA). The RxLR-dEER motif lies at 49–61 (RRLRTINGADEER).

This sequence belongs to the RxLR effector family.

It is found in the secreted. Its subcellular location is the host cytoplasm. The protein localises to the host nucleus. In terms of biological role, effector that acts as a broad suppressor of cell death to interrupt plant immunity. Inhibits cell death induced by cell death-inducing proteins, including the PAMP elicitor INF1 from P.infestans. This chain is Secreted RxLR effector protein 11, found in Plasmopara viticola (Downy mildew of grapevine).